The sequence spans 241 residues: Pyridoxal phosphate phosphatase PHOSPHO2 (241 aa).

The Nucleophile role is filled by aspartate 8. Residues aspartate 8 and aspartate 10 each contribute to the Mg(2+) site. Catalysis depends on aspartate 10, which acts as the Proton donor. Residues aspartate 19 and aspartate 99 each contribute to the substrate site. Aspartate 179 contacts Mg(2+).

The protein belongs to the HAD-like hydrolase superfamily. PHOSPHO family. It depends on Mg(2+) as a cofactor.

It catalyses the reaction pyridoxal 5'-phosphate + H2O = pyridoxal + phosphate. Functionally, phosphatase that has high activity toward pyridoxal 5'-phosphate (PLP). Also active at much lower level toward pyrophosphate, phosphoethanolamine (PEA), phosphocholine (PCho), phospho-l-tyrosine, fructose-6-phosphate, p-nitrophenyl phosphate, and h-glycerophosphate. The polypeptide is Pyridoxal phosphate phosphatase PHOSPHO2 (Phospho2) (Rattus norvegicus (Rat)).